We begin with the raw amino-acid sequence, 131 residues long: MAGTKPGDLGGIKVGQYIVIDGIACKVMDYAHSKPGKHGGAKVRLVAVGIFEPVKKEHVGPASSRIDIPIIDKRKGQVLALMGDNVQLMDMESYETLEIPMPDDVEGIESGVEVEYFEAMDRYKITRVISK.

A Hypusine modification is found at K37.

This sequence belongs to the eIF-5A family.

Its subcellular location is the cytoplasm. Its function is as follows. Functions by promoting the formation of the first peptide bond. The sequence is that of Translation initiation factor 5A (eIF5A) from Methanococcus maripaludis (strain C6 / ATCC BAA-1332).